Here is a 118-residue protein sequence, read N- to C-terminus: MLTCEMRESALARLGRALADPTRCRILVALLDGVCYPGQLAAHLGLTRSNVSNHLSCLRGCGLVVATYEGRQVRYALADSHLARALGELVQVVLAVDTDQPCVAERAASGEAVEMTGS.

Positions 3 to 97 (TCEMRESALA…ELVQVVLAVD (95 aa)) constitute an HTH arsR-type domain. Cd(2+) is bound by residues C57, C61, and C102.

Homodimer.

Functionally, metal-responsive transcriptional repressor for the cmt operon. Binding of cadmium or lead causes the repressor to dissociate from the DNA. The protein is HTH-type transcriptional regulator CmtR (cmtR) of Mycobacterium bovis (strain ATCC BAA-935 / AF2122/97).